A 330-amino-acid chain; its full sequence is Interleukin-12 subunit beta (330 aa).

Residues 1–22 (MHPQQLVVSWFSLVLLASPIMA) form the signal peptide. In terms of domain architecture, Ig-like C2-type spans 23–106 (IWELEKNVYV…LSHSLLLLHK (84 aa)). Residues cysteine 50 and cysteine 90 are joined by a disulfide bond. N-linked (GlcNAc...) asparagine glycans are attached at residues asparagine 136 and asparagine 224. A Fibronectin type-III domain is found at 239–330 (PPKNLQLKPL…WSEWASVSCS (92 aa)).

Belongs to the IL-12B family. As to quaternary structure, heterodimer with IL12A; disulfide-linked. The heterodimer is known as interleukin IL-12. Heterodimer with IL23A; disulfide-linked. The heterodimer is known as interleukin IL-23. Also secreted as a monomer. Interacts with NBR1; this interaction promotes IL-12 secretion.

The protein resides in the secreted. In terms of biological role, cytokine that can act as a growth factor for activated T and NK cells, enhance the lytic activity of NK/lymphokine-activated killer cells, and stimulate the production of IFN-gamma by resting PBMC. Associates with IL23A to form the IL-23 interleukin, a heterodimeric cytokine which functions in innate and adaptive immunity. IL-23 may constitute with IL-17 an acute response to infection in peripheral tissues. IL-23 binds to a heterodimeric receptor complex composed of IL12RB1 and IL23R, activates the Jak-Stat signaling cascade, stimulates memory rather than naive T-cells and promotes production of pro-inflammatory cytokines. IL-23 induces autoimmune inflammation and thus may be responsible for autoimmune inflammatory diseases and may be important for tumorigenesis. The protein is Interleukin-12 subunit beta (IL12B) of Lama glama (Llama).